Consider the following 156-residue polypeptide: Ribonuclease H (156 aa).

In terms of domain architecture, RNase H type-1 spans 3–144; sequence ELKQIRIYTD…CDTLAREAAE (142 aa). 4 residues coordinate Mg(2+): Asp-12, Glu-50, Asp-72, and Asp-136.

The protein belongs to the RNase H family. In terms of assembly, monomer. Mg(2+) is required as a cofactor.

The protein localises to the cytoplasm. It carries out the reaction Endonucleolytic cleavage to 5'-phosphomonoester.. Functionally, endonuclease that specifically degrades the RNA of RNA-DNA hybrids. This Shewanella amazonensis (strain ATCC BAA-1098 / SB2B) protein is Ribonuclease H.